The following is a 211-amino-acid chain: Rho-related GTP-binding protein RhoF (211 aa).

At M1 the chain carries N-acetylmethionine. 26–33 (GDGGCGKT) lines the GTP pocket. An Effector region motif is present at residues 48 to 56 (YAPSVFEKY). Residues 73–77 (DTAGQ) and 131–134 (CKTD) each bind GTP. C208 carries the post-translational modification Cysteine methyl ester. C208 carries S-geranylgeranyl cysteine lipidation. A propeptide spans 209-211 (LLL) (removed in mature form).

It belongs to the small GTPase superfamily. Rho family.

The protein localises to the cell membrane. It is found in the cytoplasm. Its subcellular location is the cytoskeleton. Functionally, plasma membrane-associated small GTPase which cycles between an active GTP-bound and an inactive GDP-bound state. Causes the formation of thin, actin-rich surface projections called filopodia. Functions cooperatively with CDC42 and Rac to generate additional structures, increasing the diversity of actin-based morphology. This is Rho-related GTP-binding protein RhoF (Rhof) from Mus musculus (Mouse).